The chain runs to 202 residues: Potassium-transporting ATPase KdpC subunit (202 aa).

Residues 7–27 (PAIFVLLALTLITGLLYPLAM) form a helical membrane-spanning segment. The disordered stretch occupies residues 66–103 (FHGRPSATSTADPNDSTKTVPAPYNAANSSGSNLGPTS). Composition is skewed to polar residues over residues 71–84 (SATSTADPNDSTKT) and 91–101 (AANSSGSNLGP).

This sequence belongs to the KdpC family. In terms of assembly, the system is composed of three essential subunits: KdpA, KdpB and KdpC.

The protein localises to the cell inner membrane. Part of the high-affinity ATP-driven potassium transport (or Kdp) system, which catalyzes the hydrolysis of ATP coupled with the electrogenic transport of potassium into the cytoplasm. This subunit acts as a catalytic chaperone that increases the ATP-binding affinity of the ATP-hydrolyzing subunit KdpB by the formation of a transient KdpB/KdpC/ATP ternary complex. The chain is Potassium-transporting ATPase KdpC subunit from Bradyrhizobium sp. (strain ORS 278).